Here is an 84-residue protein sequence, read N- to C-terminus: Large ribosomal subunit protein bL27 (84 aa).

Residues 1–21 form a disordered region; the sequence is MAHKKGVGSSRNGRDSDGQRL.

Belongs to the bacterial ribosomal protein bL27 family.

The protein is Large ribosomal subunit protein bL27 of Trichlorobacter lovleyi (strain ATCC BAA-1151 / DSM 17278 / SZ) (Geobacter lovleyi).